The chain runs to 161 residues: Putative pre-16S rRNA nuclease (161 aa).

Positions 142–161 (AGSPPGALVPRNRVDPDRHA) are disordered.

Belongs to the YqgF nuclease family.

Its subcellular location is the cytoplasm. Functionally, could be a nuclease involved in processing of the 5'-end of pre-16S rRNA. The sequence is that of Putative pre-16S rRNA nuclease from Clavibacter sepedonicus (Clavibacter michiganensis subsp. sepedonicus).